The sequence spans 170 residues: Adenine phosphoribosyltransferase (170 aa).

This sequence belongs to the purine/pyrimidine phosphoribosyltransferase family. As to quaternary structure, homodimer.

Its subcellular location is the cytoplasm. It catalyses the reaction AMP + diphosphate = 5-phospho-alpha-D-ribose 1-diphosphate + adenine. The protein operates within purine metabolism; AMP biosynthesis via salvage pathway; AMP from adenine: step 1/1. In terms of biological role, catalyzes a salvage reaction resulting in the formation of AMP, that is energically less costly than de novo synthesis. The sequence is that of Adenine phosphoribosyltransferase from Thermosynechococcus vestitus (strain NIES-2133 / IAM M-273 / BP-1).